Here is a 483-residue protein sequence, read N- to C-terminus: Inositol-pentakisphosphate 2-kinase (483 aa).

Positions 140–144 (EIKPK) match the EXKPK motif motif. Residues 279–298 (SNRSGEPRKMHLSESKPHCE) are disordered. Positions 281–297 (RSGEPRKMHLSESKPHC) are enriched in basic and acidic residues.

Belongs to the IPK1 type 2 family. In terms of tissue distribution, expressed both maternally and zygotically. Expressed in cleavage-stage embryos. Ubiquitously distributed throughout blastula stages of embryogenesis. At the onset of gastrulation, it is enriched in cells around the blastoderm margin. At shield stage, expression is detected in the deep involuted cells that contribute to mesendoderm. During mid and late gastrula stages, it is strongly expressed in axial mesendoderm. However, it is not present in the nascent tailbud at yolk plug closure (YPC) stage. Expression in axial mesendoderm is reduced at the 2 somite stage (SS). At 6 SS, it is expressed in cells surrounding Kupffer's vesicle, but apparently not within. By 10 SS, it is no longer detected as a specific signal above background.

It localises to the cytoplasm. Its subcellular location is the nucleus. It carries out the reaction 1D-myo-inositol 1,3,4,5,6-pentakisphosphate + ATP = 1D-myo-inositol hexakisphosphate + ADP + H(+). Phosphorylates Ins(1,3,4,5,6)P5 at position 2 to form Ins(1,2,3,4,5,6)P6 (InsP6 or phytate). InsP6 is involved in many processes such as mRNA export, non-homologous end-joining, endocytosis and ion channel regulation. InsP6 also acts as a key regulator of left-right asymmetry in embryo, probably by regulating asymmetric Ca(2+) during left-right specification. This chain is Inositol-pentakisphosphate 2-kinase (ippk), found in Danio rerio (Zebrafish).